A 161-amino-acid chain; its full sequence is DNA-binding protein inhibitor ID-4 (161 aa).

Residues 52 to 104 (AAEAAADEPALCLQCDMNDCYSRLRRLVPTIPPNKKVSKVEILQHVIDYILDL) enclose the bHLH domain. The segment covering 117–126 (QPPPPAPPHH) has biased composition (pro residues). A disordered region spans residues 117-161 (QPPPPAPPHHPAGTCPAAPPRTPLTALNTDPAGAVNKQGDSILCR).

As to quaternary structure, heterodimer with other HLH proteins.

It localises to the nucleus. Transcriptional regulator (lacking a basic DNA binding domain) which negatively regulates the basic helix-loop-helix (bHLH) transcription factors by forming heterodimers and inhibiting their DNA binding and transcriptional activity. Implicated in regulating a variety of cellular processes, including cellular growth, senescence, differentiation, apoptosis, angiogenesis, and neoplastic transformation. The sequence is that of DNA-binding protein inhibitor ID-4 (ID4) from Homo sapiens (Human).